The chain runs to 353 residues: Dimethylsulfoniopropionate lyase 2 (353 aa).

Active-site proton donor/acceptor residues include Cys125 and Cys274. Residues 326 to 353 (DPNETDVSKGRPTKAEHRFGPEFEEMLQ) form a disordered region. Over residues 331-346 (DVSKGRPTKAEHRFGP) the composition is skewed to basic and acidic residues.

The protein belongs to the aspartate/glutamate racemases family. ALMA1 subfamily. As to quaternary structure, homotetramer.

It catalyses the reaction S,S-dimethyl-beta-propiothetin = acrylate + dimethyl sulfide + H(+). Its function is as follows. Mediates cleavage of dimethylsulfoniopropionate (DMSP) into dimethyl sulfide (DMS) and acrylate. DMS is the principal form by which sulfur is transported from oceans to the atmosphere and is a key component of the ocean sulfur cycle. In Emiliania huxleyi (strain CCMP1516), this protein is Dimethylsulfoniopropionate lyase 2.